Consider the following 384-residue polypeptide: Inactive lipoate--protein ligase 2 (384 aa).

One can recognise a BPL/LPL catalytic domain in the interval 79–303 (NESKGNECIF…HIKHIINYKN (225 aa)).

The protein resides in the mitochondrion. It localises to the plastid. Its subcellular location is the apicoplast. Functionally, in the mitochondrion and together with LipL1, involved in the lipoylation of the E2 component of the branched chain alpha-ketoacid dehydrogenase complex BCKDH-E2/BCDH and the E2 component of the alpha -ketoglutarate dehydrogenase complex KDH. LipL1 is responsible for catalysing the activation of lipoate, forming lipoyl-AMP while LipL2 is required but is not capable of catalyzing this reaction. Although its role is unclear, it may catalyze the transfer of lipoyl groups from lipoyl-AMP to BCDH and KDH or act as an effector protein. The sequence is that of Inactive lipoate--protein ligase 2 from Plasmodium falciparum (isolate 3D7).